The following is a 90-amino-acid chain: Beta-microseminoprotein (90 aa).

5 disulfide bridges follow: Cys-2–Cys-16, Cys-34–Cys-70, Cys-37–Cys-46, Cys-39–Cys-47, and Cys-61–Cys-84. The residue at position 90 (Val-90) is a Valine amide.

This sequence belongs to the beta-microseminoprotein family.

It is found in the secreted. The protein is Beta-microseminoprotein (MSMB) of Struthio camelus (Common ostrich).